Here is a 269-residue protein sequence, read N- to C-terminus: Bifunctional protein FolD (269 aa).

Residues 149 to 151 (GLG) and valine 215 contribute to the NADP(+) site.

This sequence belongs to the tetrahydrofolate dehydrogenase/cyclohydrolase family. Homodimer.

The catalysed reaction is (6R)-5,10-methylene-5,6,7,8-tetrahydrofolate + NADP(+) = (6R)-5,10-methenyltetrahydrofolate + NADPH. It carries out the reaction (6R)-5,10-methenyltetrahydrofolate + H2O = (6R)-10-formyltetrahydrofolate + H(+). Its pathway is one-carbon metabolism; tetrahydrofolate interconversion. Catalyzes the oxidation of 5,10-methylenetetrahydrofolate to 5,10-methenyltetrahydrofolate and then the hydrolysis of 5,10-methenyltetrahydrofolate to 10-formyltetrahydrofolate. The polypeptide is Bifunctional protein FolD (Mycoplasma pneumoniae (strain ATCC 29342 / M129 / Subtype 1) (Mycoplasmoides pneumoniae)).